We begin with the raw amino-acid sequence, 405 residues long: Tryptophan synthase beta chain (405 aa).

Lysine 98 is subject to N6-(pyridoxal phosphate)lysine.

Belongs to the TrpB family. As to quaternary structure, tetramer of two alpha and two beta chains. Requires pyridoxal 5'-phosphate as cofactor.

It carries out the reaction (1S,2R)-1-C-(indol-3-yl)glycerol 3-phosphate + L-serine = D-glyceraldehyde 3-phosphate + L-tryptophan + H2O. The protein operates within amino-acid biosynthesis; L-tryptophan biosynthesis; L-tryptophan from chorismate: step 5/5. Functionally, the beta subunit is responsible for the synthesis of L-tryptophan from indole and L-serine. The polypeptide is Tryptophan synthase beta chain (Xanthomonas oryzae pv. oryzae (strain PXO99A)).